The primary structure comprises 46 residues: Lariatin (46 aa).

Residues Met-1 to Ala-26 constitute a propeptide that is removed on maturation. The isoglutamyl glycine isopeptide (Gly-Glu) cross-link spans Gly-27 to Glu-34.

The linear precursor LarA is probably cleaved by the putative peptidase LarD, generating linear 18-residue Lariatin-A or 20-residue Lariatin-B. These linear peptides are probably cross-linked by LarB. Finally, lariatins A and B may be exported by ABC transporter LarE.

Peptide antibiotic with selective activity against Mycobacterium species (M.smegmatis, MIC=3.13 ug/ml and M.tuberculosis, MIC=0.39 ug/ml). it is plausible that the target of lariatins lies within the cell wall in mycobacteria. Its function is as follows. Peptide antibiotic with selective activity against Mycobacterium species (M.smegmatis, MIC=6.25 ug/ml). The polypeptide is Lariatin (Rhodococcus jostii).